The sequence spans 83 residues: Apolipoprotein C-I, acidic form (83 aa).

The signal sequence occupies residues 1-26 (MRLFLSLPVLVVVLSMVLEGPAPAQG).

This sequence belongs to the apolipoprotein C1 family.

It is found in the secreted. The chain is Apolipoprotein C-I, acidic form (APOC1A) from Pan troglodytes (Chimpanzee).